The primary structure comprises 56 residues: Large ribosomal subunit protein bL32 (56 aa).

Residues 1 to 34 form a disordered region; it reads MAVQQNKKSRSKRGMRRSHDSLSTAQLSVDATSG. Basic residues predominate over residues 7–16; that stretch reads KKSRSKRGMR. The segment covering 21-31 has biased composition (polar residues); it reads SLSTAQLSVDA.

It belongs to the bacterial ribosomal protein bL32 family.

This Shewanella frigidimarina (strain NCIMB 400) protein is Large ribosomal subunit protein bL32.